The following is a 147-amino-acid chain: Myosin-2 essential light chain (147 aa).

3 EF-hand domains span residues 7 to 42 (DQLA…LGQN), 80 to 115 (DTAD…LGEK), and 115 to 147 (KLTD…VMSG). Position 30 is a phosphoserine (Ser-30). Residues Asp-93, Asp-95, Ser-97, Tyr-99, and Glu-104 each coordinate Ca(2+).

In terms of assembly, myosin is a hexamer of 2 heavy chains and 4 light chains.

In Drosophila melanogaster (Fruit fly), this protein is Myosin-2 essential light chain (Mlc-c).